The sequence spans 427 residues: Adenylosuccinate synthetase (427 aa).

GTP is bound by residues 12 to 18 (GDEGKGK) and 40 to 42 (GHT). The Proton acceptor role is filled by Asp-13. Positions 13 and 40 each coordinate Mg(2+). Residues 13–16 (DEGK), 38–41 (NAGH), Thr-128, Arg-142, Gln-223, Thr-238, and Arg-302 each bind IMP. The active-site Proton donor is the His-41. 298–304 (TTTGRAR) is a binding site for substrate. GTP contacts are provided by residues Arg-304, 330-332 (KLD), and 412-414 (AVG).

It belongs to the adenylosuccinate synthetase family. In terms of assembly, homodimer. Mg(2+) serves as cofactor.

The protein localises to the cytoplasm. It catalyses the reaction IMP + L-aspartate + GTP = N(6)-(1,2-dicarboxyethyl)-AMP + GDP + phosphate + 2 H(+). The protein operates within purine metabolism; AMP biosynthesis via de novo pathway; AMP from IMP: step 1/2. In terms of biological role, plays an important role in the de novo pathway of purine nucleotide biosynthesis. Catalyzes the first committed step in the biosynthesis of AMP from IMP. The sequence is that of Adenylosuccinate synthetase from Desulfitobacterium hafniense (strain Y51).